The primary structure comprises 1066 residues: DNA-directed RNA polymerase subunit beta (1066 aa).

It belongs to the RNA polymerase beta chain family. In terms of assembly, in plastids the minimal PEP RNA polymerase catalytic core is composed of four subunits: alpha, beta, beta', and beta''. When a (nuclear-encoded) sigma factor is associated with the core the holoenzyme is formed, which can initiate transcription.

It localises to the plastid. Its subcellular location is the chloroplast. The enzyme catalyses RNA(n) + a ribonucleoside 5'-triphosphate = RNA(n+1) + diphosphate. Functionally, DNA-dependent RNA polymerase catalyzes the transcription of DNA into RNA using the four ribonucleoside triphosphates as substrates. This chain is DNA-directed RNA polymerase subunit beta, found in Coffea arabica (Arabian coffee).